We begin with the raw amino-acid sequence, 223 residues long: Cytidine deaminase 3 (223 aa).

2 consecutive CMP/dCMP-type deaminase domains span residues 21–154 (TEPM…FSPD) and 184–223 (SDCSHLKCKALAAANNSFSPYTNSPSGVALQDDDGNWYRG). 62–64 (NVE) contacts substrate. Residue His75 participates in Zn(2+) binding. Catalysis depends on Glu77, which acts as the Proton donor. Cys110 and Cys113 together coordinate Zn(2+).

It belongs to the cytidine and deoxycytidylate deaminase family. Homodimer. It depends on Zn(2+) as a cofactor.

It catalyses the reaction cytidine + H2O + H(+) = uridine + NH4(+). It carries out the reaction 2'-deoxycytidine + H2O + H(+) = 2'-deoxyuridine + NH4(+). In terms of biological role, this enzyme scavenges exogenous and endogenous cytidine and 2'-deoxycytidine for UMP synthesis. This is Cytidine deaminase 3 (CDA3) from Arabidopsis thaliana (Mouse-ear cress).